A 249-amino-acid chain; its full sequence is 2,3-bisphosphoglycerate-dependent phosphoglycerate mutase (249 aa).

Substrate is bound by residues 8 to 15, 21 to 22, Arg60, 87 to 90, Lys98, 114 to 115, and 183 to 184; these read RHGESAWN, TG, ERHY, RR, and GN. His9 acts as the Tele-phosphohistidine intermediate in catalysis. The active-site Proton donor/acceptor is the Glu87.

This sequence belongs to the phosphoglycerate mutase family. BPG-dependent PGAM subfamily.

The enzyme catalyses (2R)-2-phosphoglycerate = (2R)-3-phosphoglycerate. It functions in the pathway carbohydrate degradation; glycolysis; pyruvate from D-glyceraldehyde 3-phosphate: step 3/5. In terms of biological role, catalyzes the interconversion of 2-phosphoglycerate and 3-phosphoglycerate. This chain is 2,3-bisphosphoglycerate-dependent phosphoglycerate mutase, found in Methanosphaerula palustris (strain ATCC BAA-1556 / DSM 19958 / E1-9c).